A 156-amino-acid polypeptide reads, in one-letter code: Ribosomal RNA large subunit methyltransferase H (156 aa).

Residues L73, G104, and 123–128 each bind S-adenosyl-L-methionine; that span reads LSPLTL.

The protein belongs to the RNA methyltransferase RlmH family. As to quaternary structure, homodimer.

The protein localises to the cytoplasm. The catalysed reaction is pseudouridine(1915) in 23S rRNA + S-adenosyl-L-methionine = N(3)-methylpseudouridine(1915) in 23S rRNA + S-adenosyl-L-homocysteine + H(+). Specifically methylates the pseudouridine at position 1915 (m3Psi1915) in 23S rRNA. The protein is Ribosomal RNA large subunit methyltransferase H of Aliivibrio salmonicida (strain LFI1238) (Vibrio salmonicida (strain LFI1238)).